A 364-amino-acid polypeptide reads, in one-letter code: Flagellar P-ring protein (364 aa).

The signal sequence occupies residues 1–21; sequence MNVFKVFCLMVLLGWQLPAMA.

Belongs to the FlgI family. As to quaternary structure, the basal body constitutes a major portion of the flagellar organelle and consists of four rings (L,P,S, and M) mounted on a central rod.

The protein resides in the periplasm. It localises to the bacterial flagellum basal body. Assembles around the rod to form the L-ring and probably protects the motor/basal body from shearing forces during rotation. The polypeptide is Flagellar P-ring protein (Pseudoalteromonas translucida (strain TAC 125)).